We begin with the raw amino-acid sequence, 488 residues long: Glycogen synthase (488 aa).

Arg20 contacts ADP-alpha-D-glucose.

Belongs to the glycosyltransferase 1 family. Bacterial/plant glycogen synthase subfamily.

The catalysed reaction is [(1-&gt;4)-alpha-D-glucosyl](n) + ADP-alpha-D-glucose = [(1-&gt;4)-alpha-D-glucosyl](n+1) + ADP + H(+). Its pathway is glycan biosynthesis; glycogen biosynthesis. Its function is as follows. Synthesizes alpha-1,4-glucan chains using ADP-glucose. This chain is Glycogen synthase, found in Chlorobaculum tepidum (strain ATCC 49652 / DSM 12025 / NBRC 103806 / TLS) (Chlorobium tepidum).